The sequence spans 445 residues: GTPase Der (445 aa).

EngA-type G domains are found at residues P3–Q167 and I180–M353. Residues G9 to S16, D56 to F60, N119 to E122, G186 to S193, D233 to L237, and N298 to D301 contribute to the GTP site. One can recognise a KH-like domain in the interval A354–N438.

It belongs to the TRAFAC class TrmE-Era-EngA-EngB-Septin-like GTPase superfamily. EngA (Der) GTPase family. Associates with the 50S ribosomal subunit.

In terms of biological role, GTPase that plays an essential role in the late steps of ribosome biogenesis. The chain is GTPase Der from Burkholderia cenocepacia (strain HI2424).